The chain runs to 461 residues: ATP-dependent protease ATPase subunit HslU (461 aa).

ATP-binding positions include Val21, 63-68, Asp274, Glu339, and Arg411; that span reads GVGKTE.

This sequence belongs to the ClpX chaperone family. HslU subfamily. A double ring-shaped homohexamer of HslV is capped on each side by a ring-shaped HslU homohexamer. The assembly of the HslU/HslV complex is dependent on binding of ATP.

The protein localises to the cytoplasm. Functionally, ATPase subunit of a proteasome-like degradation complex; this subunit has chaperone activity. The binding of ATP and its subsequent hydrolysis by HslU are essential for unfolding of protein substrates subsequently hydrolyzed by HslV. HslU recognizes the N-terminal part of its protein substrates and unfolds these before they are guided to HslV for hydrolysis. This Caldanaerobacter subterraneus subsp. tengcongensis (strain DSM 15242 / JCM 11007 / NBRC 100824 / MB4) (Thermoanaerobacter tengcongensis) protein is ATP-dependent protease ATPase subunit HslU.